Here is a 671-residue protein sequence, read N- to C-terminus: Palmitoleoyl-protein carboxylesterase NOTUM (671 aa).

The first 46 residues, 1-46 (MAVEQIDKMAAKAGEATNKWIKPQQPLLTLLLLLATFSQLPAVCSS), serve as a signal peptide directing secretion. An N-linked (GlcNAc...) asparagine glycan is attached at N95. Active-site charge relay system residues include S237 and D338. N-linked (GlcNAc...) asparagine glycosylation is present at N372. H384 (charge relay system) is an active-site residue. The tract at residues 411–592 (HSTRSRRHDK…TKSKKRHRVP (182 aa)) is disordered. A compositionally biased stretch (basic residues) spans 439 to 454 (NQRHQRHRQRLQRQKH). Over residues 470–486 (LSKEEREERKRLRQEQR) the composition is skewed to basic and acidic residues. Residues 487–497 (QRRKQRRRQQQ) are compositionally biased toward basic residues. Residues 505 to 514 (QEHRNKKDNS) are compositionally biased toward basic and acidic residues. Positions 570 to 583 (PQKTRSSNNASAGT) are enriched in polar residues. N578 and N612 each carry an N-linked (GlcNAc...) asparagine glycan.

The protein belongs to the pectinacetylesterase family. Notum subfamily.

The protein resides in the secreted. It is found in the cell surface. It carries out the reaction [Wnt protein]-O-(9Z)-hexadecenoyl-L-serine + H2O = [Wnt protein]-L-serine + (9Z)-hexadecenoate + H(+). Its function is as follows. Carboxylesterase that acts as a key negative regulator of the Wnt signaling pathway by specifically mediating depalmitoleoylation of WNT proteins. Serine palmitoleoylation of WNT proteins is required for efficient binding to frizzled receptors. Also acts as a regulator of long-range activity of Hedgehog (hh), possibly by regulating the switch between low and high level hh pathway signaling. The protein is Palmitoleoyl-protein carboxylesterase NOTUM of Drosophila melanogaster (Fruit fly).